Consider the following 186-residue polypeptide: Large ribosomal subunit protein uL15 (186 aa).

The interval 1-48 is disordered; it reads MDLSSLRPAKGAVKARKRVGRGPGSGNGTTAGKGNKGQQSRSGYQRPV. The span at 21 to 35 shows a compositional bias: gly residues; that stretch reads RGPGSGNGTTAGKGN.

The protein belongs to the universal ribosomal protein uL15 family. Part of the 50S ribosomal subunit.

Functionally, binds to the 23S rRNA. This is Large ribosomal subunit protein uL15 from Chlorobaculum tepidum (strain ATCC 49652 / DSM 12025 / NBRC 103806 / TLS) (Chlorobium tepidum).